The sequence spans 350 residues: GDSL esterase/lipase At2g04570 (350 aa).

The N-terminal stretch at 1-23 is a signal peptide; the sequence is MGHLKSLFTILFLIAMSSTVTFA. Catalysis depends on S35, which acts as the Nucleophile. N98 and N117 each carry an N-linked (GlcNAc...) asparagine glycan. Residues D325 and H328 contribute to the active site. The N-linked (GlcNAc...) asparagine glycan is linked to N343.

Belongs to the 'GDSL' lipolytic enzyme family.

It localises to the secreted. In Arabidopsis thaliana (Mouse-ear cress), this protein is GDSL esterase/lipase At2g04570.